A 515-amino-acid chain; its full sequence is Fatty acyl-CoA reductase 1 (515 aa).

The Cytoplasmic portion of the chain corresponds to 1 to 465 (MVSIPEYYEG…ARKHLNKLRN (465 aa)). Residues 451-507 (SGLPAARKHLNKLRNIRYGFNTILVILIWRIFIARSQMARNIWYFVVSLCYKFLSYF) are necessary and sufficient for PEX19-mediated localization into peroxisome membrane. Residues 466 to 483 (IRYGFNTILVILIWRIFI) form a helical membrane-spanning segment. Topologically, residues 484 to 515 (ARSQMARNIWYFVVSLCYKFLSYFRASSTMRY) are peroxisomal.

The protein belongs to the fatty acyl-CoA reductase family. In terms of assembly, interacts with PEX19; PEX19 mediates the targeting of FAR1 to peroxisomes.

The protein resides in the peroxisome membrane. The enzyme catalyses a long-chain fatty acyl-CoA + 2 NADPH + 2 H(+) = a long-chain primary fatty alcohol + 2 NADP(+) + CoA. It carries out the reaction hexadecanoyl-CoA + 2 NADPH + 2 H(+) = hexadecan-1-ol + 2 NADP(+) + CoA. It catalyses the reaction octadecanoyl-CoA + 2 NADPH + 2 H(+) = octadecan-1-ol + 2 NADP(+) + CoA. The catalysed reaction is (9Z)-octadecenoyl-CoA + 2 NADPH + 2 H(+) = (9Z)-octadecen-1-ol + 2 NADP(+) + CoA. The enzyme catalyses (9Z,12Z)-octadecadienoyl-CoA + 2 NADPH + 2 H(+) = (9Z,12Z)-octadecadien-1-ol + 2 NADP(+) + CoA. It carries out the reaction eicosanoyl-CoA + 2 NADPH + 2 H(+) = eicosan-1-ol + 2 NADP(+) + CoA. It catalyses the reaction 16-methylheptadecanoyl-CoA + 2 NADPH + 2 H(+) = 16-methylheptadecan-1-ol + 2 NADP(+) + CoA. The catalysed reaction is 18-methylnonadecanoyl-CoA + 2 NADPH + 2 H(+) = 18-methylnonadecan-1-ol + 2 NADP(+) + CoA. Functionally, catalyzes the reduction of saturated and unsaturated C16 or C18 fatty acyl-CoA to fatty alcohols. It plays an essential role in the production of ether lipids/plasmalogens which synthesis requires fatty alcohols. In parallel, it is also required for wax monoesters production since fatty alcohols also constitute a substrate for their synthesis. This Pongo abelii (Sumatran orangutan) protein is Fatty acyl-CoA reductase 1.